Consider the following 360-residue polypeptide: Phospho-N-acetylmuramoyl-pentapeptide-transferase (360 aa).

10 helical membrane-spanning segments follow: residues 25–45 (RTIY…PWLI), 73–93 (TMGG…WADL), 94–114 (TNAY…IGFV), 134–154 (FCLQ…GLNG), 173–193 (PGYV…VNLT), 198–218 (GLAI…AYVA), 240–260 (VFCG…AYPA), 262–282 (IFMG…VAIL), 287–307 (LALV…ILQV), and 337–357 (KVIV…VSTL).

It belongs to the glycosyltransferase 4 family. MraY subfamily. The cofactor is Mg(2+).

It localises to the cell inner membrane. It carries out the reaction UDP-N-acetyl-alpha-D-muramoyl-L-alanyl-gamma-D-glutamyl-meso-2,6-diaminopimeloyl-D-alanyl-D-alanine + di-trans,octa-cis-undecaprenyl phosphate = di-trans,octa-cis-undecaprenyl diphospho-N-acetyl-alpha-D-muramoyl-L-alanyl-D-glutamyl-meso-2,6-diaminopimeloyl-D-alanyl-D-alanine + UMP. The protein operates within cell wall biogenesis; peptidoglycan biosynthesis. Its function is as follows. Catalyzes the initial step of the lipid cycle reactions in the biosynthesis of the cell wall peptidoglycan: transfers peptidoglycan precursor phospho-MurNAc-pentapeptide from UDP-MurNAc-pentapeptide onto the lipid carrier undecaprenyl phosphate, yielding undecaprenyl-pyrophosphoryl-MurNAc-pentapeptide, known as lipid I. The chain is Phospho-N-acetylmuramoyl-pentapeptide-transferase from Desulfatibacillum aliphaticivorans.